The chain runs to 185 residues: Inner membrane-spanning protein YciB (185 aa).

5 helical membrane-spanning segments follow: residues 27–47, 53–73, 76–96, 118–138, and 149–169; these read IVLV…YGIV, IMAS…EIRY, WKVT…QFQF, TLNL…IYIS, and FKSF…GVYI.

The protein belongs to the YciB family.

The protein resides in the cell inner membrane. In terms of biological role, plays a role in cell envelope biogenesis, maintenance of cell envelope integrity and membrane homeostasis. The sequence is that of Inner membrane-spanning protein YciB from Haemophilus influenzae (strain 86-028NP).